The chain runs to 302 residues: Bifunctional phosphoglucose/phosphomannose isomerase (302 aa).

The region spanning 27-160 (VEGEVVRIEA…KVYGIDVKIP (134 aa)) is the SIS domain. D-fructose 6-phosphate-binding residues include Gly-47, Ser-48, Ser-87, Ser-89, Thr-92, and Arg-135. Gly-47, Ser-48, Ser-87, Ser-89, Thr-92, and Arg-135 together coordinate D-glucose 6-phosphate. The Proton acceptor role is filled by Glu-203. Residues His-219 and Lys-298 each contribute to the D-fructose 6-phosphate site. 2 residues coordinate D-glucose 6-phosphate: His-219 and Lys-298. The Proton donor role is filled by His-219. Residue Lys-298 is the Proton acceptor of the active site.

It belongs to the PGI/PMI family. As to quaternary structure, homodimer.

It is found in the cytoplasm. The enzyme catalyses alpha-D-glucose 6-phosphate = beta-D-fructose 6-phosphate. It catalyses the reaction D-mannose 6-phosphate = D-fructose 6-phosphate. With respect to regulation, inhibited by 5-phosphoarabinonate (PAB) and 6-phosphogluconate. In terms of biological role, dual specificity isomerase that catalyzes the isomerization of both glucose-6-phosphate and mannose-6-phosphate to fructose-6-phosphate with similar catalytic efficiency. The protein is Bifunctional phosphoglucose/phosphomannose isomerase of Pyrobaculum aerophilum (strain ATCC 51768 / DSM 7523 / JCM 9630 / CIP 104966 / NBRC 100827 / IM2).